The chain runs to 190 residues: Elongation factor P (190 aa).

The residue at position 34 (Lys-34) is an N6-(3,6-diaminohexanoyl)-5-hydroxylysine.

It belongs to the elongation factor P family. In terms of processing, may be beta-lysylated on the epsilon-amino group of Lys-34 by the combined action of EpmA and EpmB, and then hydroxylated on the C5 position of the same residue by EpmC (if this protein is present). Lysylation is critical for the stimulatory effect of EF-P on peptide-bond formation. The lysylation moiety may extend toward the peptidyltransferase center and stabilize the terminal 3-CCA end of the tRNA. Hydroxylation of the C5 position on Lys-34 may allow additional potential stabilizing hydrogen-bond interactions with the P-tRNA.

It is found in the cytoplasm. The protein operates within protein biosynthesis; polypeptide chain elongation. Involved in peptide bond synthesis. Alleviates ribosome stalling that occurs when 3 or more consecutive Pro residues or the sequence PPG is present in a protein, possibly by augmenting the peptidyl transferase activity of the ribosome. Modification of Lys-34 is required for alleviation. The protein is Elongation factor P of Psychrobacter cryohalolentis (strain ATCC BAA-1226 / DSM 17306 / VKM B-2378 / K5).